Consider the following 456-residue polypeptide: N(6)-adenosine-methyltransferase non-catalytic subunit METTL14 (456 aa).

The segment at 45–76 is disordered; it reads AETRETCRASYDTSAPNAKRKYQDEGETDEDK. Interaction with METTL3 stretches follow at residues 135–136 and 237–238; these read RD and SG. Residues 245–254 form a positively charged region required for RNA-binding region; that stretch reads RVCLRKWGYR. 2 interaction with METTL3 regions span residues 255-258 and 278-287; these read RCED and KAVFQRTKEH. The positively charged region required for RNA-binding stretch occupies residues 297–298; that stretch reads KR. The segment at 308-312 is interaction with METTL3; it reads NVDID. A disordered region spans residues 393-456; that stretch reads ERLRPKSPPP…GAHRGGFPPR (64 aa). At serine 399 the chain carries Phosphoserine. A compositionally biased stretch (gly residues) spans 409–423; that stretch reads GGGAPRGGGRGGTSA. The span at 425–440 shows a compositional bias: basic and acidic residues; it reads RGRERNRSNFRGERGG. Residues 441-450 are compositionally biased toward gly residues; sequence FRGGRGGAHR.

The protein belongs to the MT-A70-like family. As to quaternary structure, heterodimer; heterodimerizes with METTL3 to form an antiparallel heterodimer that constitutes an active methyltransferase. Component of the WMM complex, a N6-methyltransferase complex composed of a catalytic subcomplex, named MAC, and of an associated subcomplex, named MACOM. The MAC subcomplex is composed of METTL3 and METTL14. The MACOM subcomplex is composed of WTAP, ZC3H13, CBLL1/HAKAI, VIRMA, and, in some cases of RBM15 (RBM15 or RBM15B).

It is found in the nucleus. In terms of biological role, the METTL3-METTL14 heterodimer forms a N6-methyltransferase complex that methylates adenosine residues at the N(6) position of some mRNAs and regulates the circadian clock, differentiation of embryonic stem cells and cortical neurogenesis. In the heterodimer formed with METTL3, METTL14 constitutes the RNA-binding scaffold that recognizes the substrate rather than the catalytic core. N6-methyladenosine (m6A), which takes place at the 5'-[AG]GAC-3' consensus sites of some mRNAs, plays a role in mRNA stability and processing. M6A acts as a key regulator of mRNA stability by promoting mRNA destabilization and degradation. In embryonic stem cells (ESCs), m6A methylation of mRNAs encoding key naive pluripotency-promoting transcripts results in transcript destabilization. M6A regulates spermatogonial differentiation and meiosis and is essential for male fertility and spermatogenesis. M6A also regulates cortical neurogenesis: m6A methylation of transcripts related to transcription factors, neural stem cells, the cell cycle and neuronal differentiation during brain development promotes their destabilization and decay, promoting differentiation of radial glial cells. This chain is N(6)-adenosine-methyltransferase non-catalytic subunit METTL14 (METTL14), found in Bos taurus (Bovine).